Here is a 248-residue protein sequence, read N- to C-terminus: MTTNTQTVDTSELAKFEAMAAEWWDPMGKFRPLHLMNPVRLDYITRQIAAEYGRDLKSPNPFKGLRILDIGCGGGLLAEPMARLGATVVGADAAEGNLPVARLHAEKSGLEIDYRHTTAEALVAAGEQFDSVLNMEVVEHVADPLAYLTACKDLLKPGGIMLCSTLNRNPKSFAMAIVGAEYVLKWLPKGTHDWRKFLTPDELTKLLEQAGLEPVDKKGMVFNPLSQQWSLSDRDLSVNYVTASIRPA.

S-adenosyl-L-methionine contacts are provided by arginine 40, glycine 71, aspartate 92, and methionine 135.

The protein belongs to the methyltransferase superfamily. UbiG/COQ3 family.

The enzyme catalyses a 3-demethylubiquinol + S-adenosyl-L-methionine = a ubiquinol + S-adenosyl-L-homocysteine + H(+). It catalyses the reaction a 3-(all-trans-polyprenyl)benzene-1,2-diol + S-adenosyl-L-methionine = a 2-methoxy-6-(all-trans-polyprenyl)phenol + S-adenosyl-L-homocysteine + H(+). It participates in cofactor biosynthesis; ubiquinone biosynthesis. Its function is as follows. O-methyltransferase that catalyzes the 2 O-methylation steps in the ubiquinone biosynthetic pathway. The polypeptide is Ubiquinone biosynthesis O-methyltransferase (Dinoroseobacter shibae (strain DSM 16493 / NCIMB 14021 / DFL 12)).